We begin with the raw amino-acid sequence, 100 residues long: uncharacterized protein (100 aa).

This is an uncharacterized protein from Rickettsia prowazekii (strain Madrid E).